The following is a 360-amino-acid chain: Phospho-N-acetylmuramoyl-pentapeptide-transferase (360 aa).

10 helical membrane passes run 24-44 (RAVM…PWTI), 69-89 (GTPT…TLLW), 92-112 (WANP…ALGF), 133-153 (MVWQ…LAAN), 158-178 (ILIV…GFLV), 199-219 (GLAT…AYAS), 239-259 (VVIF…FNAY), 263-283 (VFMG…VAVI), 288-308 (FVLV…MLQV), and 337-357 (QVVV…LSTL).

Belongs to the glycosyltransferase 4 family. MraY subfamily. Mg(2+) is required as a cofactor.

It localises to the cell inner membrane. It carries out the reaction UDP-N-acetyl-alpha-D-muramoyl-L-alanyl-gamma-D-glutamyl-meso-2,6-diaminopimeloyl-D-alanyl-D-alanine + di-trans,octa-cis-undecaprenyl phosphate = di-trans,octa-cis-undecaprenyl diphospho-N-acetyl-alpha-D-muramoyl-L-alanyl-D-glutamyl-meso-2,6-diaminopimeloyl-D-alanyl-D-alanine + UMP. The protein operates within cell wall biogenesis; peptidoglycan biosynthesis. Its function is as follows. Catalyzes the initial step of the lipid cycle reactions in the biosynthesis of the cell wall peptidoglycan: transfers peptidoglycan precursor phospho-MurNAc-pentapeptide from UDP-MurNAc-pentapeptide onto the lipid carrier undecaprenyl phosphate, yielding undecaprenyl-pyrophosphoryl-MurNAc-pentapeptide, known as lipid I. The polypeptide is Phospho-N-acetylmuramoyl-pentapeptide-transferase (Neisseria meningitidis serogroup C / serotype 2a (strain ATCC 700532 / DSM 15464 / FAM18)).